Consider the following 181-residue polypeptide: Oligoribonuclease (181 aa).

The Exonuclease domain maps to 8-171; it reads LIWIDMEMTG…ADIYDSIEEL (164 aa). Y129 is a catalytic residue.

This sequence belongs to the oligoribonuclease family.

The protein resides in the cytoplasm. 3'-to-5' exoribonuclease specific for small oligoribonucleotides. This is Oligoribonuclease from Nitrosomonas europaea (strain ATCC 19718 / CIP 103999 / KCTC 2705 / NBRC 14298).